A 158-amino-acid polypeptide reads, in one-letter code: 2-C-methyl-D-erythritol 2,4-cyclodiphosphate synthase (158 aa).

Aspartate 10 and histidine 12 together coordinate a divalent metal cation. 4-CDP-2-C-methyl-D-erythritol 2-phosphate is bound by residues 10–12 and 36–37; these read DVH and HS. Histidine 44 lines the a divalent metal cation pocket. Residues 58-60, 63-67, and arginine 144 contribute to the 4-CDP-2-C-methyl-D-erythritol 2-phosphate site; these read DIG and FSDTD.

Belongs to the IspF family. As to quaternary structure, homotrimer. Requires a divalent metal cation as cofactor.

It catalyses the reaction 4-CDP-2-C-methyl-D-erythritol 2-phosphate = 2-C-methyl-D-erythritol 2,4-cyclic diphosphate + CMP. The protein operates within isoprenoid biosynthesis; isopentenyl diphosphate biosynthesis via DXP pathway; isopentenyl diphosphate from 1-deoxy-D-xylulose 5-phosphate: step 4/6. Involved in the biosynthesis of isopentenyl diphosphate (IPP) and dimethylallyl diphosphate (DMAPP), two major building blocks of isoprenoid compounds. Catalyzes the conversion of 4-diphosphocytidyl-2-C-methyl-D-erythritol 2-phosphate (CDP-ME2P) to 2-C-methyl-D-erythritol 2,4-cyclodiphosphate (ME-CPP) with a corresponding release of cytidine 5-monophosphate (CMP). This chain is 2-C-methyl-D-erythritol 2,4-cyclodiphosphate synthase, found in Burkholderia vietnamiensis (strain G4 / LMG 22486) (Burkholderia cepacia (strain R1808)).